Consider the following 72-residue polypeptide: DNA-directed RNA polymerase subunit Rpo10 (72 aa).

Positions 7, 10, 53, and 54 each coordinate Zn(2+).

It belongs to the archaeal Rpo10/eukaryotic RPB10 RNA polymerase subunit family. As to quaternary structure, part of the RNA polymerase complex. Zn(2+) serves as cofactor.

The protein localises to the cytoplasm. It catalyses the reaction RNA(n) + a ribonucleoside 5'-triphosphate = RNA(n+1) + diphosphate. Functionally, DNA-dependent RNA polymerase (RNAP) catalyzes the transcription of DNA into RNA using the four ribonucleoside triphosphates as substrates. The polypeptide is DNA-directed RNA polymerase subunit Rpo10 (Thermoplasma acidophilum (strain ATCC 25905 / DSM 1728 / JCM 9062 / NBRC 15155 / AMRC-C165)).